The following is a 281-amino-acid chain: Diaminopimelate epimerase (281 aa).

Positions 11 and 65 each coordinate substrate. Cys-74 functions as the Proton donor in the catalytic mechanism. Substrate is bound by residues 75–76, Asn-164, Asn-197, and 215–216; these read GN and ER. Cys-224 functions as the Proton acceptor in the catalytic mechanism. Residue 225 to 226 participates in substrate binding; sequence GT.

The protein belongs to the diaminopimelate epimerase family. In terms of assembly, homodimer.

The protein resides in the cytoplasm. It carries out the reaction (2S,6S)-2,6-diaminopimelate = meso-2,6-diaminopimelate. It participates in amino-acid biosynthesis; L-lysine biosynthesis via DAP pathway; DL-2,6-diaminopimelate from LL-2,6-diaminopimelate: step 1/1. Catalyzes the stereoinversion of LL-2,6-diaminopimelate (L,L-DAP) to meso-diaminopimelate (meso-DAP), a precursor of L-lysine and an essential component of the bacterial peptidoglycan. This is Diaminopimelate epimerase from Heliobacterium modesticaldum (strain ATCC 51547 / Ice1).